Consider the following 392-residue polypeptide: MSFLTLKDVDLKNKKVLVRVDFNVPVKDGKVTSKVRIEAAIPTIQYILDQGGAVILMSHLGRPTEGEYDSQFSLEPVAEVLSQIIKKPVRFAKDWLNGVDAKAGEIVMCDNVRFNKGEKKSDDELSKKIASLGDVFVMDAFATAHRAQASTYGVAKYVPVACAGLLLANEIKALEKALKAPKKPMAAIVGGSKVSTKLSVLHNLLDKVEILIVGGGIANTFIKAEGFNIGNSLYEEDLVGEAKDILAKAKELGVNIPVPVDVRVAKELSENAVAVVKNVADVADDEMILDIGPKSERNIAELLKSANTILWNGPVGVFEFDNFAEGTKALSLAIAESDAFSVAGGGDTIAAIEKFDIKDKVSYISTAGGAFLEFLEGKKLPAVEILKEKATI.

Substrate-binding positions include 21–23 (DFN), Arg-36, 59–62 (HLGR), Arg-113, and Arg-146. Residues Lys-197, Glu-319, and 345–348 (GGDT) each bind ATP.

The protein belongs to the phosphoglycerate kinase family. As to quaternary structure, monomer.

Its subcellular location is the cytoplasm. The catalysed reaction is (2R)-3-phosphoglycerate + ATP = (2R)-3-phospho-glyceroyl phosphate + ADP. The protein operates within carbohydrate degradation; glycolysis; pyruvate from D-glyceraldehyde 3-phosphate: step 2/5. The sequence is that of Phosphoglycerate kinase from Francisella philomiragia subsp. philomiragia (strain ATCC 25017 / CCUG 19701 / FSC 153 / O#319-036).